Consider the following 367-residue polypeptide: Quinolinate synthase (367 aa).

Iminosuccinate is bound by residues His45 and Ser62. [4Fe-4S] cluster is bound at residue Cys109. Iminosuccinate contacts are provided by residues 140–142 (YVN) and Ser161. Cys229 contacts [4Fe-4S] cluster. Residues 255–257 (HPE) and Thr272 contribute to the iminosuccinate site. Cys319 is a [4Fe-4S] cluster binding site.

It belongs to the quinolinate synthase family. Type 3 subfamily. [4Fe-4S] cluster is required as a cofactor.

Its subcellular location is the cytoplasm. It catalyses the reaction iminosuccinate + dihydroxyacetone phosphate = quinolinate + phosphate + 2 H2O + H(+). It functions in the pathway cofactor biosynthesis; NAD(+) biosynthesis; quinolinate from iminoaspartate: step 1/1. Functionally, catalyzes the condensation of iminoaspartate with dihydroxyacetone phosphate to form quinolinate. This is Quinolinate synthase from Geobacillus thermodenitrificans (strain NG80-2).